We begin with the raw amino-acid sequence, 424 residues long: Dihydroorotase (424 aa).

2 residues coordinate Zn(2+): histidine 58 and histidine 60. Residues 60-62 (HLR), asparagine 92, and asparagine 276 contribute to the substrate site. Aspartate 303 serves as a coordination point for Zn(2+). Residue aspartate 303 is part of the active site. Substrate is bound by residues histidine 307 and 321–322 (FG).

This sequence belongs to the metallo-dependent hydrolases superfamily. DHOase family. Class I DHOase subfamily. Zn(2+) is required as a cofactor.

It catalyses the reaction (S)-dihydroorotate + H2O = N-carbamoyl-L-aspartate + H(+). It participates in pyrimidine metabolism; UMP biosynthesis via de novo pathway; (S)-dihydroorotate from bicarbonate: step 3/3. Catalyzes the reversible cyclization of carbamoyl aspartate to dihydroorotate. The polypeptide is Dihydroorotase (Staphylococcus aureus (strain COL)).